We begin with the raw amino-acid sequence, 101 residues long: Large ribosomal subunit protein bL28 (101 aa).

This sequence belongs to the bacterial ribosomal protein bL28 family.

This is Large ribosomal subunit protein bL28 from Rhodopseudomonas palustris (strain BisB5).